Here is a 508-residue protein sequence, read N- to C-terminus: MFS-type transporter penM (508 aa).

The interval 1–60 is disordered; sequence MKDGEETPSVDGSTSASNREKLGTDLEIGPVDLSDGGKEEKVKDPNLVDWDGPDDPENPL. Over residues 35–46 the composition is skewed to basic and acidic residues; that stretch reads DGGKEEKVKDPN. N61 carries an N-linked (GlcNAc...) asparagine glycan. The chain crosses the membrane as a helical span at residues 73 to 93; the sequence is SIALITFLTPLGSSMFAPGVG. N-linked (GlcNAc...) asparagine glycosylation occurs at N100. Helical transmembrane passes span 108 to 128, 143 to 163, 166 to 186, 197 to 217, 225 to 245, and 299 to 319; these read SFVV…IAPL, ILYV…SLVV, FFAG…IADM, AAWA…GAYL, WSFY…LFSI, and PIVF…YLLF. The Peroxisomal targeting signal motif lies at 293–307; sequence KMLFRSPIVFLLSLY. N331 carries N-linked (GlcNAc...) asparagine glycosylation. Transmembrane regions (helical) follow at residues 335–355, 379–399, 407–427, 435–457, and 475–495; these read GAVG…LFLI, LPPM…YGWT, IVPI…FMCV, FTNY…GALL, and SLLG…WIYG.

The protein belongs to the major facilitator superfamily.

Its subcellular location is the peroxisome membrane. MFS-type transporter involved in penicillin production, most likely through the translocation of isopenicillin N from the cytosol to the peroxisomal lumen across the peroxisomal membrane. The sequence is that of MFS-type transporter penM from Penicillium rubens (strain ATCC 28089 / DSM 1075 / NRRL 1951 / Wisconsin 54-1255) (Penicillium chrysogenum).